Here is a 149-residue protein sequence, read N- to C-terminus: MKCPFCSHQETQVVETRVSEDGDFIRRRRQCGACDKRFTTYERPEVNFPTVVKKDGRRVEYDREKLLGSFKLALRKRPVSTVQIDSAIERIEEKLLNLGQREILSSRIGELVMRELKKLDKVAYVRYASVYRSFEDIDEFRALVDEVRK.

Residues 3–34 fold into a zinc finger; sequence CPFCSHQETQVVETRVSEDGDFIRRRRQCGAC. The region spanning 49-139 is the ATP-cone domain; that stretch reads PTVVKKDGRR…VYRSFEDIDE (91 aa).

This sequence belongs to the NrdR family. The cofactor is Zn(2+).

Negatively regulates transcription of bacterial ribonucleotide reductase nrd genes and operons by binding to NrdR-boxes. The polypeptide is Transcriptional repressor NrdR (Acidovorax sp. (strain JS42)).